A 394-amino-acid polypeptide reads, in one-letter code: MPDKFKRVHVIVMDSVGIGEAPDAAKFGDFDVDTFGHIAKHVGGLKMPEMGKLGLSNIREIDGIKKAEKPLAYYTKMQEASNGKDTMTGHWEIMGLYIDTPFRVFPDGFPDDLINQIEEKTGRKVIGNKPASGTEIMAELGEEHVKTGALIVYTSADSVLQIAAHEDVVPLEELYEICEFCREITLDDPYMLGRIIARPFVGEPGAFVRTPNRHDYALKPFKPTVMDALKDGGKDVIAIGKISDIFDGEGVTESIRTKSNMDGMDQFIAVLDKDFNGMSFLNLVDFDALFGHRRDPQGYADALVDFDGRLVEVMEKLTDDDLLIITADHGNDPTYSGTDHTREFVPLLVYSPRFKNGGSELELRKTFADLGATVADNFEVKMPEYGTSFLKDLK.

The Mn(2+) site is built by Asp14, Asp287, His292, Asp328, His329, and His340.

It belongs to the phosphopentomutase family. Mn(2+) serves as cofactor.

It is found in the cytoplasm. It carries out the reaction 2-deoxy-alpha-D-ribose 1-phosphate = 2-deoxy-D-ribose 5-phosphate. The catalysed reaction is alpha-D-ribose 1-phosphate = D-ribose 5-phosphate. Its pathway is carbohydrate degradation; 2-deoxy-D-ribose 1-phosphate degradation; D-glyceraldehyde 3-phosphate and acetaldehyde from 2-deoxy-alpha-D-ribose 1-phosphate: step 1/2. In terms of biological role, isomerase that catalyzes the conversion of deoxy-ribose 1-phosphate (dRib-1-P) and ribose 1-phosphate (Rib-1-P) to deoxy-ribose 5-phosphate (dRib-5-P) and ribose 5-phosphate (Rib-5-P), respectively. In Listeria monocytogenes serotype 4a (strain HCC23), this protein is Phosphopentomutase.